The sequence spans 333 residues: Large ribosomal subunit protein uL3 (333 aa).

The protein belongs to the universal ribosomal protein uL3 family. In terms of assembly, part of the 50S ribosomal subunit. Forms a cluster with proteins L14 and L24e.

Its function is as follows. One of the primary rRNA binding proteins, it binds directly near the 3'-end of the 23S rRNA, where it nucleates assembly of the 50S subunit. This Methanocorpusculum labreanum (strain ATCC 43576 / DSM 4855 / Z) protein is Large ribosomal subunit protein uL3.